The following is an 88-amino-acid chain: Toxin ICK-12 (88 aa).

A signal peptide spans 1 to 19 (MKSIVYMLLFCTFTVVILG). 4 cysteine pairs are disulfide-bonded: Cys41/Cys55, Cys41/Cys78, Cys54/Cys67, and Cys81/Cys88.

The protein belongs to the neurotoxin 27 (Jztx-72) family. ICK-41 subfamily. Expressed by the venom gland.

The protein resides in the secreted. In terms of biological role, probable neurotoxin with ion channel impairing activity. This Trittame loki (Brush-footed trapdoor spider) protein is Toxin ICK-12.